The primary structure comprises 976 residues: Peptidylglycine alpha-amidating monooxygenase (976 aa).

Positions 1 to 25 are cleaved as a signal peptide; the sequence is MAGRARSGLLLLLLGLLALQSSCLA. The interval 1 to 497 is peptidylglycine alpha-hydroxylating monooxygenase; sequence MAGRARSGLL…EGPWEPEPSG (497 aa). Positions 26–35 are excised as a propeptide; it reads FRSPLSVFKR. Over 36-866 the chain is Intragranular; sequence FKETTRSFSN…QKLSTEPGSG (831 aa). Disulfide bonds link cysteine 47-cysteine 186, cysteine 81-cysteine 126, cysteine 114-cysteine 131, cysteine 227-cysteine 334, and cysteine 293-cysteine 315. Histidine 107 and histidine 108 together coordinate Cu(2+). Histidine 172, histidine 242, histidine 244, and methionine 314 together coordinate Cu(2+). The tract at residues 498 to 820 is peptidyl-alpha-hydroxyglycine alpha-amidating lyase; it reads DFHVEEELDW…LTEKMEHRSV (323 aa). NHL repeat units follow at residues 501-544, 570-611, 620-665, and 673-717; these read VEEE…NSFD, AEIL…LDPH, LGRS…FSPS, and GEES…FKTD. Valine 520 contributes to the Ca(2+) binding site. A protein is bound at residue arginine 533. Histidine 585 lines the Zn(2+) pocket. Residue leucine 587 coordinates Ca(2+). Cysteine 634 and cysteine 655 are joined by a disulfide. Tyrosine 654 serves as a coordination point for a protein. Residue histidine 690 coordinates Zn(2+). Cysteine 702 and cysteine 713 are oxidised to a cystine. An a protein-binding site is contributed by arginine 706. Asparagine 765 is a glycosylation site (N-linked (GlcNAc...) asparagine). An NHL 5 repeat occupies 769 to 812; sequence GEIIDVFKPVRKHFDMPHDIVASEDGTVYIGDAHTNTVWKFTLT. The residue at position 774 (valine 774) is a Sulfotyrosine. Residue histidine 786 participates in Zn(2+) binding. Aspartate 787 lines the Ca(2+) pocket. Glutamate 792 is subject to Sulfotyrosine. A helical transmembrane segment spans residues 867–890; sequence VSVVLITTLLVIPVLVLLAIVMFI. The Cytoplasmic segment spans residues 891 to 976; that stretch reads RWKKSRAFGD…APLPKPAPSS (86 aa). Residues serine 921, serine 932, and serine 945 each carry the phosphoserine modification. The tract at residues 928-945 is interaction with RASSF9; it reads NFFASRKGYSRKGFDRVS. The disordered stretch occupies residues 940 to 976; the sequence is GFDRVSTEGSDQEKDEDDGTESEEEYSAPLPKPAPSS. Threonine 946 is modified (phosphothreonine). Serine 949 bears the Phosphoserine mark. Positions 952-965 are enriched in acidic residues; the sequence is EKDEDDGTESEEEY. Threonine 959 bears the Phosphothreonine mark. Serine 961 carries the phosphoserine modification.

This sequence in the C-terminal section; belongs to the peptidyl-alpha-hydroxyglycine alpha-amidating lyase family. The protein in the N-terminal section; belongs to the copper type II ascorbate-dependent monooxygenase family. As to quaternary structure, monomer. Interacts with RASSF9. Zn(2+) serves as cofactor. The cofactor is Cu(2+).

The protein localises to the cytoplasmic vesicle. Its subcellular location is the secretory vesicle membrane. It localises to the membrane. It is found in the secreted. It carries out the reaction a [peptide]-C-terminal glycine + 2 L-ascorbate + O2 = a [peptide]-C-terminal (2S)-2-hydroxyglycine + 2 monodehydro-L-ascorbate radical + H2O. It catalyses the reaction a [peptide]-C-terminal (2S)-2-hydroxyglycine = a [peptide]-C-terminal amide + glyoxylate. The enzyme catalyses N-dodecanoylglycine + 2 L-ascorbate + O2 = N-dodecanoyl-(2S)-hydroxyglycine + 2 monodehydro-L-ascorbate radical + H2O. The catalysed reaction is N-dodecanoyl-(2S)-hydroxyglycine = dodecanamide + glyoxylate. It carries out the reaction N-(9Z,12Z,15Z)-octadecatrienoylglycine + 2 L-ascorbate + O2 = N-(9Z,12Z,15Z)-octadecatrienoyl-(2S)-hydroxyglycine + 2 monodehydro-L-ascorbate radical + H2O. It catalyses the reaction N-(9Z,12Z,15Z)-octadecatrienoyl-(2S)-hydroxyglycine = (9Z,12Z,15Z)-octadecatrienamide + glyoxylate. The enzyme catalyses N-(9Z-octadecenoyl)glycine + 2 L-ascorbate + O2 = N-(9Z-octadecenoyl)-(2S)-hydroxyglycine + 2 monodehydro-L-ascorbate radical + H2O. The catalysed reaction is N-(9Z-octadecenoyl)-(2S)-hydroxyglycine = (9Z)-octadecenamide + glyoxylate. It carries out the reaction N-tetradecanoylglycine + 2 L-ascorbate + O2 = N-tetradecanoyl-(2S)-hydroxyglycine + 2 monodehydro-L-ascorbate radical + H2O. It catalyses the reaction N-tetradecanoyl-(2S)-hydroxyglycine = tetradecamide + glyoxylate. The enzyme catalyses N-decanoylglycine + 2 L-ascorbate + O2 = N-decanoyl-(2S)-hydroxyglycine + 2 monodehydro-L-ascorbate radical + H2O. The catalysed reaction is N-decanoyl-(2S)-hydroxyglycine = decanamide + glyoxylate. It carries out the reaction N-octanoylglycine + 2 L-ascorbate + O2 = N-octanoyl-(2S)-hydroxyglycine + 2 monodehydro-L-ascorbate radical + H2O. It catalyses the reaction N-octanoyl-(2S)-hydroxyglycine = octanamide + glyoxylate. PAM activity is inhibited by EDTA, phenylglyoxal and diethyl pyrocarbonate. PAL activity is stimulated by cadmium and inhibited by mercury. In terms of biological role, bifunctional enzyme that catalyzes amidation of the C-terminus of proteins. Alpha-amidation is present at the C-terminus of many endocrine hormones and neuropeptides and is required for their activity. C-terminal amidation also takes place in response to protein fragmentation triggered by oxidative stress, promoting degradation of amidated protein fragments by the proteasome. Alpha-amidation involves two sequential reactions, both of which are catalyzed by separate catalytic domains of the enzyme. The first step, catalyzed by peptidyl alpha-hydroxylating monooxygenase (PHM) domain, is the copper-, ascorbate-, and O2- dependent stereospecific hydroxylation (with S stereochemistry) at the alpha-carbon (C-alpha) of the C-terminal glycine of the peptidylglycine substrate. The second step, catalyzed by the peptidylglycine amidoglycolate lyase (PAL) domain, is the zinc-dependent cleavage of the N-C-alpha bond, producing the alpha-amidated peptide and glyoxylate. Similarly, catalyzes the two-step conversion of an N-fatty acylglycine to a primary fatty acid amide and glyoxylate. The sequence is that of Peptidylglycine alpha-amidating monooxygenase from Rattus norvegicus (Rat).